Consider the following 354-residue polypeptide: UDP-N-acetylglucosamine--N-acetylmuramyl-(pentapeptide) pyrophosphoryl-undecaprenol N-acetylglucosamine transferase (354 aa).

Residues 12–14 (TGG), Asn-124, Arg-163, Ser-187, Ile-240, and Gln-285 contribute to the UDP-N-acetyl-alpha-D-glucosamine site.

The protein belongs to the glycosyltransferase 28 family. MurG subfamily.

Its subcellular location is the cell inner membrane. It catalyses the reaction di-trans,octa-cis-undecaprenyl diphospho-N-acetyl-alpha-D-muramoyl-L-alanyl-D-glutamyl-meso-2,6-diaminopimeloyl-D-alanyl-D-alanine + UDP-N-acetyl-alpha-D-glucosamine = di-trans,octa-cis-undecaprenyl diphospho-[N-acetyl-alpha-D-glucosaminyl-(1-&gt;4)]-N-acetyl-alpha-D-muramoyl-L-alanyl-D-glutamyl-meso-2,6-diaminopimeloyl-D-alanyl-D-alanine + UDP + H(+). It functions in the pathway cell wall biogenesis; peptidoglycan biosynthesis. In terms of biological role, cell wall formation. Catalyzes the transfer of a GlcNAc subunit on undecaprenyl-pyrophosphoryl-MurNAc-pentapeptide (lipid intermediate I) to form undecaprenyl-pyrophosphoryl-MurNAc-(pentapeptide)GlcNAc (lipid intermediate II). In Methylococcus capsulatus (strain ATCC 33009 / NCIMB 11132 / Bath), this protein is UDP-N-acetylglucosamine--N-acetylmuramyl-(pentapeptide) pyrophosphoryl-undecaprenol N-acetylglucosamine transferase.